The primary structure comprises 211 residues: NEDD4 family-interacting protein 1 (211 aa).

A compositionally biased stretch (polar residues) spans 1-13 (MSEQSSSRYQQLQ). The interval 1–48 (MSEQSSSRYQQLQNEEEPGENPQASTDAPPPYSSIAGESSGLFDYKDE) is disordered. The Cytoplasmic portion of the chain corresponds to 1 to 106 (MSEQSSSRYQ…ADQLRIGNDG (106 aa)). 2 consecutive short sequence motifs (PPxY motif) follow at residues 29–32 (PPPY) and 54–57 (PPSY). Residues 107-127 (IFMLTFFMAFLFNWIGFFLSF) form a helical membrane-spanning segment. Residues 128-133 (CLTSSA) are Extracellular-facing. A helical transmembrane segment spans residues 134 to 154 (AGRYGAISGFGLSLIKWILIV). The Cytoplasmic portion of the chain corresponds to 155–162 (RFSTYFPG). A helical transmembrane segment spans residues 163-183 (YFDGQYWLWWVFLVLGFLLFL). At 184 to 211 (RGFINYAKVRKMPDNFSTLPRTRVLFIY) the chain is on the extracellular side.

It is found in the golgi apparatus membrane. In terms of biological role, may play a role in Golgi structure maintenance. This is NEDD4 family-interacting protein 1 (ndfip1) from Xenopus tropicalis (Western clawed frog).